The following is a 212-amino-acid chain: Interleukin-6 (212 aa).

Residues 1–29 form the signal peptide; it reads MNSFSTSAFGPVAFSLGLLLVLPAAFPAP. Cys72 and Cys78 form a disulfide bridge. The N-linked (GlcNAc...) asparagine glycan is linked to Asn73. Position 81 is a phosphoserine; by FAM20C (Ser81). Cys101 and Cys111 are oxidised to a cystine.

This sequence belongs to the IL-6 superfamily. In terms of assembly, component of a hexamer of two molecules each of IL6, IL6R and IL6ST; first binds to IL6R to associate with the signaling subunit IL6ST. Interacts with IL6R (via the N-terminal ectodomain); this interaction may be affected by IL6R-binding with SORL1, hence decreasing IL6 cis signaling. Interacts with SORL1 (via the N-terminal ectodomain); this interaction leads to IL6 internalization and lysosomal degradation. May form a trimeric complex with the soluble SORL1 ectodomain and soluble IL6R receptor; this interaction might stabilize circulating IL6, hence promoting IL6 trans signaling. Post-translationally, N- and O-glycosylated. In terms of tissue distribution, produced by skeletal muscle.

It is found in the secreted. In terms of biological role, cytokine with a wide variety of biological functions in immunity, tissue regeneration, and metabolism. Binds to IL6R, then the complex associates to the signaling subunit IL6ST/gp130 to trigger the intracellular IL6-signaling pathway. The interaction with the membrane-bound IL6R and IL6ST stimulates 'classic signaling', whereas the binding of IL6 and soluble IL6R to IL6ST stimulates 'trans-signaling'. Alternatively, 'cluster signaling' occurs when membrane-bound IL6:IL6R complexes on transmitter cells activate IL6ST receptors on neighboring receiver cells. Its function is as follows. IL6 is a potent inducer of the acute phase response. Rapid production of IL6 contributes to host defense during infection and tissue injury, but excessive IL6 synthesis is involved in disease pathology. In the innate immune response, is synthesized by myeloid cells, such as macrophages and dendritic cells, upon recognition of pathogens through toll-like receptors (TLRs) at the site of infection or tissue injury. In the adaptive immune response, is required for the differentiation of B cells into immunoglobulin-secreting cells. Plays a major role in the differentiation of CD4(+) T cell subsets. Essential factor for the development of T follicular helper (Tfh) cells that are required for the induction of germinal-center formation. Required to drive naive CD4(+) T cells to the Th17 lineage. Also required for proliferation of myeloma cells and the survival of plasmablast cells. Functionally, acts as an essential factor in bone homeostasis and on vessels directly or indirectly by induction of VEGF, resulting in increased angiogenesis activity and vascular permeability. Induces, through 'trans-signaling' and synergistically with IL1B and TNF, the production of VEGF. Involved in metabolic controls, is discharged into the bloodstream after muscle contraction increasing lipolysis and improving insulin resistance. 'Trans-signaling' in central nervous system also regulates energy and glucose homeostasis. Mediates, through GLP-1, crosstalk between insulin-sensitive tissues, intestinal L cells and pancreatic islets to adapt to changes in insulin demand. Also acts as a myokine. Plays a protective role during liver injury, being required for maintenance of tissue regeneration. Also has a pivotal role in iron metabolism by regulating HAMP/hepcidin expression upon inflammation or bacterial infection. Through activation of IL6ST-YAP-NOTCH pathway, induces inflammation-induced epithelial regeneration. This chain is Interleukin-6, found in Homo sapiens (Human).